The following is a 432-amino-acid chain: 3-phosphoshikimate 1-carboxyvinyltransferase (432 aa).

Residues lysine 22, serine 23, and arginine 27 each contribute to the 3-phosphoshikimate site. Lysine 22 is a phosphoenolpyruvate binding site. The phosphoenolpyruvate site is built by glycine 96 and arginine 127. 3-phosphoshikimate is bound by residues serine 173, serine 174, glutamine 175, serine 201, aspartate 316, asparagine 339, and lysine 343. Residue glutamine 175 participates in phosphoenolpyruvate binding. Residue aspartate 316 is the Proton acceptor of the active site. Phosphoenolpyruvate contacts are provided by arginine 347, arginine 391, and lysine 416.

It belongs to the EPSP synthase family. In terms of assembly, monomer.

Its subcellular location is the cytoplasm. It catalyses the reaction 3-phosphoshikimate + phosphoenolpyruvate = 5-O-(1-carboxyvinyl)-3-phosphoshikimate + phosphate. The protein operates within metabolic intermediate biosynthesis; chorismate biosynthesis; chorismate from D-erythrose 4-phosphate and phosphoenolpyruvate: step 6/7. Catalyzes the transfer of the enolpyruvyl moiety of phosphoenolpyruvate (PEP) to the 5-hydroxyl of shikimate-3-phosphate (S3P) to produce enolpyruvyl shikimate-3-phosphate and inorganic phosphate. The chain is 3-phosphoshikimate 1-carboxyvinyltransferase from Haemophilus influenzae (strain 86-028NP).